Consider the following 980-residue polypeptide: Zinc finger BED domain-containing protein 6 (980 aa).

Positions 1–89 (MSVCTLSVPV…ILAKKFSKDL (89 aa)) are required for nucleolar localization. The tract at residues 89–109 (LGSGRPVADAPASLASGAPEQ) is disordered. The BED-type 1 zinc-finger motif lies at 130–187 (AKTSIVWHFFHVDPQYTWRAICNLCEKSVSRGKPGSHLGTSTLQRHLQARHSPHWTRA). The Zn(2+) site is built by Cys-151, Cys-154, His-175, and His-180. The disordered stretch occupies residues 201 to 239 (LDLSLSPPSPGSNGSFEYIPTDSVDENRMGKKRDKSASD). Residues 203 to 215 (LSLSPPSPGSNGS) show a composition bias toward low complexity. Residues 265–322 (AKTSAVWNFFYTDPQHISRAVCNICKRSVSRGRPGSHLGTSTLQRHLQATHPIHWAVA) form a BED-type 2 zinc finger. Zn(2+) is bound by residues Cys-286, Cys-289, His-310, and His-315. The tract at residues 328–397 (AIGNGLDETE…ADQDNPVHAQ (70 aa)) is disordered. Residues 360 to 373 (TAEDLSDSDTDEPP) are compositionally biased toward acidic residues. Phosphoserine is present on Ser-383. The HATC (Hobo-Ac-Tam3) domain stretch occupies residues 868–950 (VVDEYFKEKY…EQLIFLKMNL (83 aa)).

Expressed in pancreatic islet cells and weakly expressed in surrounding exocrine tissues (at protein level). Expressed in muscle and brain (at protein level). Shows broad tissue distribution with expression detected in brain, stomach, intestine, heart, kidney, liver, lung, skeletal muscle, ovary, spleen, tail and testis.

It is found in the nucleus. The protein localises to the nucleolus. It localises to the cytoplasm. Functionally, transcriptional repressor which binds to the consensus sequence 5'-GCTCGC-3', transcription regulation may be tissue-specific. Regulates the expression of target genes such as: IGF2, PGAP6/TMEM8, ENHO, and PIANP. Acts as a transcriptional repressor of growth factor IGF2, thereby negatively regulating postnatal growth of muscles and internal organs, especially in females. Negatively regulates myoblast differentiation and myoblast mitochondrial activity via its regulation of IGF2 transcription. Negatively regulates the cell cycle of myoblasts, potentially via transcriptional regulation of the E2F family of transcription factors such as: E2F1 and E2F2. Positively regulates the cell cycle and survival of pancreatic beta cells. Binds to the CDH2 gene and may directly repress CDH2 transcription. Probably by controlling CDH2 expression, regulates pancreatic beta cell adhesion, and formation of cell-to-cell junctions between pancreatic beta cells and neural crest stem cells. May also play a role in embryonic beta cell differentiation. May play a role in insulin sensitivity and glucose clearance. The protein is Zinc finger BED domain-containing protein 6 of Mus musculus (Mouse).